We begin with the raw amino-acid sequence, 1029 residues long: Chitin synthase 2 (1029 aa).

Disordered regions lie at residues 1-160, 174-216, and 234-257; these read MDRP…GARS, SDVD…SHLR, and AHYG…QKSR. Residues 61–77 show a composition bias toward low complexity; it reads PSVSSIHSRPSSISNIP. Residues 244–257 are compositionally biased toward basic and acidic residues; it reads DQQRRGVREPQKSR. Asn348 carries an N-linked (GlcNAc...) asparagine glycan. Helical transmembrane passes span 639–659, 681–701, 716–736, 752–772, 791–811, 820–840, 918–938, and 952–972; these read WLNG…QLWA, VLFT…VAGG, LYIF…QFIL, SMVI…YIVI, NLIV…FIYL, SIQY…YAFC, YMVV…SEIY, and ILWS…TFAI.

This sequence belongs to the chitin synthase family. Class II subfamily.

Its subcellular location is the cell membrane. It catalyses the reaction [(1-&gt;4)-N-acetyl-beta-D-glucosaminyl](n) + UDP-N-acetyl-alpha-D-glucosamine = [(1-&gt;4)-N-acetyl-beta-D-glucosaminyl](n+1) + UDP + H(+). Functionally, polymerizes chitin, a structural polymer of the cell wall and septum, by transferring the sugar moiety of UDP-GlcNAc to the non-reducing end of the growing chitin polymer. Plays an important role in cell wall integrity and has distinct functions in invasive hyphae and vegetative hyphae, but is not involved in plant infection. The protein is Chitin synthase 2 of Pyricularia oryzae (strain 70-15 / ATCC MYA-4617 / FGSC 8958) (Rice blast fungus).